The following is a 343-amino-acid chain: Lipase chaperone (343 aa).

Residues 7-27 form a helical membrane-spanning segment; that stretch reads IYLGIGLVALLMIFIYWLMPK.

This sequence belongs to the lipase chaperone family.

The protein localises to the cell inner membrane. May be involved in the folding of the extracellular lipase during its passage through the periplasm. In Acinetobacter baylyi (strain ATCC 33305 / BD413 / ADP1), this protein is Lipase chaperone (lifO).